Consider the following 372-residue polypeptide: uncharacterized protein (372 aa).

A PNPLA domain is found at F38–I270. Positions G42–G47 match the GXGXXG motif. Residues G74 to G78 carry the GXSXG motif. S76 functions as the Nucleophile in the catalytic mechanism. The active-site Proton acceptor is the D257. The short motif at D257 to G259 is the DGA/G element.

Its function is as follows. Probable lipid hydrolase. This is an uncharacterized protein from Acanthamoeba polyphaga (Amoeba).